Here is a 428-residue protein sequence, read N- to C-terminus: Chaperone SurA (428 aa).

Positions 1-19 (MNIWKTLLLGMLVTGSAVS) are cleaved as a signal peptide. PpiC domains lie at 170–268 (SVEY…KIED) and 277–377 (VTEV…EVLD).

Its subcellular location is the periplasm. It carries out the reaction [protein]-peptidylproline (omega=180) = [protein]-peptidylproline (omega=0). In terms of biological role, chaperone involved in the correct folding and assembly of outer membrane proteins. Recognizes specific patterns of aromatic residues and the orientation of their side chains, which are found more frequently in integral outer membrane proteins. May act in both early periplasmic and late outer membrane-associated steps of protein maturation. The polypeptide is Chaperone SurA (Vibrio vulnificus (strain YJ016)).